A 693-amino-acid polypeptide reads, in one-letter code: Cleavage and polyadenylation specificity factor subunit 3-I (693 aa).

The HXHXDH motif motif lies at 81–86; the sequence is HFHIDH.

This sequence belongs to the metallo-beta-lactamase superfamily. RNA-metabolizing metallo-beta-lactamase-like family. INTS11 subfamily. As to quaternary structure, component of the CPSF complex, at least composed of CPSF160, CPSF100, CPSF73-I, CPSF73-II, CPSF30, FY and FIPS5. Interacts with CLPS3, CPSF100, CPSF160 and FY. In terms of tissue distribution, highly expressed in carpels. Also detected in seedlings, roots, stems, leaves, flowers and siliques.

It is found in the nucleus. Functionally, component of the cleavage and polyadenylation specificity factor (CPSF) complex that play a key role in pre-mRNA 3'-end formation, recognizing the AAUAAA signal sequence and interacting with poly(A) polymerase and other factors to bring about cleavage and poly(A) addition. May function as mRNA 3'-end-processing endonuclease and also be involved in the histone 3'-end pre-mRNA processing. In Arabidopsis thaliana (Mouse-ear cress), this protein is Cleavage and polyadenylation specificity factor subunit 3-I (CPSF73-I).